The sequence spans 405 residues: NADH-quinone oxidoreductase subunit D (405 aa).

It belongs to the complex I 49 kDa subunit family. As to quaternary structure, NDH-1 is composed of 14 different subunits. Subunits NuoB, C, D, E, F, and G constitute the peripheral sector of the complex.

The protein resides in the cell inner membrane. It catalyses the reaction a quinone + NADH + 5 H(+)(in) = a quinol + NAD(+) + 4 H(+)(out). Functionally, NDH-1 shuttles electrons from NADH, via FMN and iron-sulfur (Fe-S) centers, to quinones in the respiratory chain. The immediate electron acceptor for the enzyme in this species is believed to be ubiquinone. Couples the redox reaction to proton translocation (for every two electrons transferred, four hydrogen ions are translocated across the cytoplasmic membrane), and thus conserves the redox energy in a proton gradient. This Ruegeria pomeroyi (strain ATCC 700808 / DSM 15171 / DSS-3) (Silicibacter pomeroyi) protein is NADH-quinone oxidoreductase subunit D.